A 315-amino-acid chain; its full sequence is Methionyl-tRNA formyltransferase (315 aa).

(6S)-5,6,7,8-tetrahydrofolate is bound at residue 113–116; that stretch reads SLLP.

Belongs to the Fmt family.

The catalysed reaction is L-methionyl-tRNA(fMet) + (6R)-10-formyltetrahydrofolate = N-formyl-L-methionyl-tRNA(fMet) + (6S)-5,6,7,8-tetrahydrofolate + H(+). Attaches a formyl group to the free amino group of methionyl-tRNA(fMet). The formyl group appears to play a dual role in the initiator identity of N-formylmethionyl-tRNA by promoting its recognition by IF2 and preventing the misappropriation of this tRNA by the elongation apparatus. The polypeptide is Methionyl-tRNA formyltransferase (Escherichia coli O45:K1 (strain S88 / ExPEC)).